The primary structure comprises 326 residues: Diphthine methyltransferase (326 aa).

4 WD repeats span residues 65–105 (MHCD…ELMF), 113–152 (DSSV…IKNK), 155–195 (EHDY…SCIW), and 293–326 (EHES…WEDI).

This sequence belongs to the DPH7 family.

The protein resides in the cytoplasm. Its subcellular location is the nucleus. The enzyme catalyses diphthine methyl ester-[translation elongation factor 2] + H2O = diphthine-[translation elongation factor 2] + methanol + H(+). Its pathway is protein modification; peptidyl-diphthamide biosynthesis. Functionally, catalyzes the demethylation of diphthine methyl ester to form diphthine, an intermediate in diphthamide biosynthesis, a post-translational modification of histidine which occurs in translation elongation factor 2 (eft201 and eft202). The polypeptide is Diphthine methyltransferase (rrt2) (Schizosaccharomyces pombe (strain 972 / ATCC 24843) (Fission yeast)).